Here is a 241-residue protein sequence, read N- to C-terminus: MAKQVENNNNDHLVQSTDPEHPSNLIPELCRKFYNWGWVTGTGGGTSIRRDDHIFIAPSGVQKELMKPENIFVLQFPTPKYPPSERKYIRKPLDLKPSACTPLFLAAFERGAGCCIHTHSQWAVLVTLLVEREKGPGGYFEISNIEQIKGIPRGKGKGMLGFFDTLRIPIIENTAFEEDLTGSLEKAMEENPDTCAVLVRRHGIYVWGDNVAKAKTQCESLDYLFQLAVEMHKLGIPWVKE.

Polar residues predominate over residues 1 to 17; that stretch reads MAKQVENNNNDHLVQST. Positions 1–21 are disordered; sequence MAKQVENNNNDHLVQSTDPEH. Cys100 is a substrate binding site. The Zn(2+) site is built by His117 and His119. The Proton donor/acceptor role is filled by Glu146. Residue His202 coordinates Zn(2+).

It belongs to the aldolase class II family. MtnB subfamily. The cofactor is Zn(2+).

It is found in the cytoplasm. It catalyses the reaction 5-(methylsulfanyl)-D-ribulose 1-phosphate = 5-methylsulfanyl-2,3-dioxopentyl phosphate + H2O. It functions in the pathway amino-acid biosynthesis; L-methionine biosynthesis via salvage pathway; L-methionine from S-methyl-5-thio-alpha-D-ribose 1-phosphate: step 2/6. Its function is as follows. Catalyzes the dehydration of methylthioribulose-1-phosphate (MTRu-1-P) into 2,3-diketo-5-methylthiopentyl-1-phosphate (DK-MTP-1-P). The protein is Methylthioribulose-1-phosphate dehydratase of Aspergillus flavus (strain ATCC 200026 / FGSC A1120 / IAM 13836 / NRRL 3357 / JCM 12722 / SRRC 167).